Here is a 38-residue protein sequence, read N- to C-terminus: Photosystem II reaction center protein L (38 aa).

Residues 17–37 (SLYWGLLLIFVLAVLFSNYFF) traverse the membrane as a helical segment.

It belongs to the PsbL family. As to quaternary structure, PSII is composed of 1 copy each of membrane proteins PsbA, PsbB, PsbC, PsbD, PsbE, PsbF, PsbH, PsbI, PsbJ, PsbK, PsbL, PsbM, PsbT, PsbX, PsbY, PsbZ, Psb30/Ycf12, at least 3 peripheral proteins of the oxygen-evolving complex and a large number of cofactors. It forms dimeric complexes.

Its subcellular location is the plastid. It is found in the chloroplast thylakoid membrane. Its function is as follows. One of the components of the core complex of photosystem II (PSII). PSII is a light-driven water:plastoquinone oxidoreductase that uses light energy to abstract electrons from H(2)O, generating O(2) and a proton gradient subsequently used for ATP formation. It consists of a core antenna complex that captures photons, and an electron transfer chain that converts photonic excitation into a charge separation. This subunit is found at the monomer-monomer interface and is required for correct PSII assembly and/or dimerization. The polypeptide is Photosystem II reaction center protein L (Adiantum capillus-veneris (Maidenhair fern)).